The chain runs to 146 residues: Large ribosomal subunit protein uL24z (146 aa).

2 disordered regions span residues 1-26 and 121-146; these read MKYN…SSER and KAKG…QNVD. The span at 9–18 shows a compositional bias: basic residues; that stretch reads SSRRKNRKAH. Residues 121 to 138 are compositionally biased toward basic and acidic residues; the sequence is KAKGRAAADKEKGTKFTS.

This sequence belongs to the universal ribosomal protein uL24 family.

The protein is Large ribosomal subunit protein uL24z (RPL26A) of Arabidopsis thaliana (Mouse-ear cress).